Here is a 334-residue protein sequence, read N- to C-terminus: MKKIRPLTEADVTAESAFFMQRRQVLKALGISAAALSLPSTAQADLFSWFKGNDRPKAPAGKPLEFSQPAAWRSDLALTPEDKVTGYNNFYEFGLDKADPAANAGSLKTEPWTLKISGEVAKPFTLDYDDLTHRFPLEERIYRMRCVEAWSMVVPWIGFPLYKLLAQAQPTSHAKYVAFETLYAPDDMPGQKDRFIGGGLKYPYVEGLRLDEAMHPLTLMTVGVYGKALPPQNGAPIRLIVPWKYGFKGIKSIVSIKLTRERPPTTWNLSAPNEYGFYANVNPHVDHPRWSQATERFIGSGGILDVQRQPTLLFNGYANEVASLYRGLNLRENF.

Positions Met1–Ala44 form a signal peptide, tat-type signal. Mo-molybdopterin-binding positions include Asn88, Tyr91–Glu92, Cys146, Thr181, Asn233, Arg238, and Gly249–Lys251.

Belongs to the MsrP family. Heterodimer of a catalytic subunit (MsrP) and a heme-binding subunit (MsrQ). It depends on Mo-molybdopterin as a cofactor. In terms of processing, predicted to be exported by the Tat system. The position of the signal peptide cleavage has not been experimentally proven.

It is found in the periplasm. It catalyses the reaction L-methionyl-[protein] + a quinone + H2O = L-methionyl-(S)-S-oxide-[protein] + a quinol. The enzyme catalyses L-methionyl-[protein] + a quinone + H2O = L-methionyl-(R)-S-oxide-[protein] + a quinol. Functionally, part of the MsrPQ system that repairs oxidized periplasmic proteins containing methionine sulfoxide residues (Met-O), using respiratory chain electrons. Thus protects these proteins from oxidative-stress damage caused by reactive species of oxygen and chlorine generated by the host defense mechanisms. MsrPQ is essential for the maintenance of envelope integrity under bleach stress, rescuing a wide series of structurally unrelated periplasmic proteins from methionine oxidation, including the primary periplasmic chaperone SurA and the lipoprotein Pal. The catalytic subunit MsrP is non-stereospecific, being able to reduce both (R-) and (S-) diastereoisomers of methionine sulfoxide. This chain is Protein-methionine-sulfoxide reductase catalytic subunit MsrP, found in Salmonella newport (strain SL254).